The chain runs to 3655 residues: NuA4 acetyltransferase complex subunit Tra2 (3655 aa).

An HEAT region spans residues 8–2459; it reads SLSSSIELLK…REYHIRLLGK (2452 aa). HEAT repeat units follow at residues 46–89, 94–131, 149–188, 230–268, 300–338, 374–412, 438–475, 606–643, 644–683, 735–772, 783–820, 828–867, 1100–1141, 1147–1184, 1193–1230, 1429–1470, 1665–1704, 1709–1746, 1753–1790, 1808–1846, 1891–1934, 1973–2011, 2036–2073, 2120–2157, 2183–2221, and 2401–2438; these read QLYA…CAHR, QYAQ…TFKF, TNLP…IIQQ, PGVQ…FIEF, LSEK…ILST, STLA…SIGL, FLLL…ETKS, IFLK…STSS, KFLN…VTVS, SLYK…ELCL, PYMS…LTPD, PYIE…RNRK, AFIL…QDHS, DRQV…QLFR, EIAP…LSNT, RKLL…LFHL, NLVS…FLLK, GILL…NVYA, IGAL…SEDV, QFPY…YIFS, EHRG…WNDL, SEAI…TDAN, ENLS…LSNT, DALH…LQIV, DQRR…NSPV, and DFVL…DEIP. A head region spans residues 2460-3655; that stretch reads TPNVLETILT…QMDQLWQAWL (1196 aa). An FAT domain is found at 2484–3045; that stretch reads LLVYLSKTYG…HFQLRTAYED (562 aa). Residues 3059–3105 are disordered; the sequence is RGNSRLRENDSSSDNKSKDLSPSGSFSSVSQFNSKNGSPSSIDSSEK. Basic and acidic residues predominate over residues 3063–3077; that stretch reads RLRENDSSSDNKSKD. A compositionally biased stretch (low complexity) spans 3078 to 3092; it reads LSPSGSFSSVSQFNS. The region spanning 3285–3625 is the PI3K/PI4K catalytic domain; that stretch reads VPNVDLVRGH…VISHNVPEDL (341 aa). The segment at 3291 to 3297 is G-loop; that stretch reads VRGHTMC. The interval 3491–3499 is catalytic loop; it reads NIGGRSPQK. The segment at 3511–3536 is activation loop; that stretch reads SQDLLPSMTSNQPVFHNTEAVPFRLT. An FATC domain is found at 3623 to 3655; the sequence is EDLPLNQTLVDLVSQATNPQQLAQMDQLWQAWL.

Belongs to the PI3/PI4-kinase family. TRA1 subfamily. In terms of assembly, component of the NuA4 acetyltransferase complex. Tra1 is the scaffold subunit for binding to a variety of transcription activators or transcription factors to recruit NuA4 for targeted gene activation. Requires Hsp90 and its co-chaperone, the Triple-T complex (TTT), for its incorporation into NuA4. Interacts with tel2.

Component of the NuA4 histone H4/H2A acetyltransferase involved in transcription and DNA repair. In Schizosaccharomyces pombe (strain 972 / ATCC 24843) (Fission yeast), this protein is NuA4 acetyltransferase complex subunit Tra2.